We begin with the raw amino-acid sequence, 351 residues long: Cardiolipin synthase (CMP-forming) (351 aa).

The segment at 74-120 is disordered; it reads PAPQLSASHQHQAQQQQQQTKQPQQPYDPQQDQVPSTSTASSSKPAA. A compositionally biased stretch (low complexity) spans 76 to 120; it reads PQLSASHQHQAQQQQQQTKQPQQPYDPQQDQVPSTSTASSSKPAA. 5 helical membrane-spanning segments follow: residues 139–159, 191–211, 251–271, 280–300, and 321–341; these read PLIG…ALAV, VLIG…GWVA, AAAA…GGGG, PLLI…GYLL, and LIMG…LAYG.

It belongs to the CDP-alcohol phosphatidyltransferase class-I family. It depends on Mn(2+) as a cofactor.

The protein localises to the mitochondrion inner membrane. It catalyses the reaction a CDP-1,2-diacyl-sn-glycerol + a 1,2-diacyl-sn-glycero-3-phospho-(1'-sn-glycerol) = a cardiolipin + CMP + H(+). Catalyzes the synthesis of cardiolipin (CL) (diphosphatidylglycerol) by specifically transferring a phosphatidyl group from CDP-diacylglycerol to phosphatidylglycerol (PG). CL is a key phospholipid in mitochondrial membranes and plays important roles in maintaining the functional integrity and dynamics of mitochondria under both optimal and stress conditions. Cannot catalyze the phosphatidyl group transfer from one PG molecule to another to form CL. This is Cardiolipin synthase (CMP-forming) from Chlamydomonas reinhardtii (Chlamydomonas smithii).